The chain runs to 815 residues: MRYDEAANFLLDLRRYGPKPGTESTADLLASLGDPHQDGPDYVQIAGSNGKGSTARFTESILRAAGLDVGLYTSPHFDDVRERVTVNGRRMSKAALTTFIETITPYVTERAADGAAPTYFEVVTAMALWQFSRADVDVAVLEVGIGGRLDATSVVDPSASAVTSVTLEHTDVLGETIPEIARDKAHVAPAGDTPLVTATTDDALAAVRDHAGAVRTVGDTAGRDVTATYEGRTNHTEAAVSITGDDWSVATEIPLLGDHQAENAGVAAALARQTAGVDDDAIARGLRSAHWPGRFEVMGADPVVVLDGAHNPGACGAVAETVAEFDYDRLLTVFGAMHDKDHGAMAAALPTPDHVWACEPVPDRAEDADVLAAVFEDAGAGTVSVTRAVESAVADAIAEATADDLVLVAGSLFAVAEARTRWTRTFAETDVDSLDDARDALERAHVTPPGVWRMRGKGVHRVVKTRVQTRQAQYLKEELLSLGGECSVSGLNAQSGAMVDAVMMATMAQFKRLCEKLDGQPYGLSEVGADLRESLGIQAAPATHGYPWEGERTAVMGILNVTPDSFHDGGEYDALEDAVARAESMAENGVDVIDIGGESTRPGADAVSVADELDRVLPVIERISDLDVLLSVDTRKAEVARQALEAGADILNDVTGLDDPEMRFVAAEYDAPIVVMHSIDAPVDPDSDPDYDDVVDDVIAELTERVLLAEKAGVPRERIIVDPGLGFGKSAAEGFELLDRADEFHALGGPVLVGHSHKSMFGAVDRYPDEGGYATAAASALAADRGADIVRVHDVPENVAAVRVAEATRTGADAE.

Residues 1–416 (MRYDEAANFL…LVAGSLFAVA (416 aa)) are folylpolyglutamate synthase. 47–53 (GSNGKGS) is a binding site for ATP. Positions 553–803 (TAVMGILNVT…DVPENVAAVR (251 aa)) constitute a Pterin-binding domain. Residues 555–815 (VMGILNVTPD…EATRTGADAE (261 aa)) form a DHPS region. Asn-560 contributes to the Mg(2+) binding site. Residues Thr-600, Asp-633, Asn-652, Asp-722, Lys-758, and 791–793 (RVH) each bind (7,8-dihydropterin-6-yl)methyl diphosphate.

In the N-terminal section; belongs to the folylpolyglutamate synthase family. The protein in the C-terminal section; belongs to the DHPS family. It depends on Mg(2+) as a cofactor.

The enzyme catalyses (6S)-5,6,7,8-tetrahydrofolyl-(gamma-L-Glu)(n) + L-glutamate + ATP = (6S)-5,6,7,8-tetrahydrofolyl-(gamma-L-Glu)(n+1) + ADP + phosphate + H(+). The catalysed reaction is (7,8-dihydropterin-6-yl)methyl diphosphate + 4-aminobenzoate = 7,8-dihydropteroate + diphosphate. The protein operates within cofactor biosynthesis; tetrahydrofolylpolyglutamate biosynthesis. Its pathway is cofactor biosynthesis; tetrahydrofolate biosynthesis; 7,8-dihydrofolate from 2-amino-4-hydroxy-6-hydroxymethyl-7,8-dihydropteridine diphosphate and 4-aminobenzoate: step 1/2. In terms of biological role, can complement an H.volcanii mutant strain that is thymidine auxotroph because it lacks the two dihydrofolate reductase genes encoded by hdrA and hdrB. This is Probable bifunctional folylpolyglutamate synthase/dihydropteroate synthase (folP) from Halobacterium salinarum (strain ATCC 700922 / JCM 11081 / NRC-1) (Halobacterium halobium).